A 117-amino-acid chain; its full sequence is Large ribosomal subunit protein bL20 (117 aa).

This sequence belongs to the bacterial ribosomal protein bL20 family.

Binds directly to 23S ribosomal RNA and is necessary for the in vitro assembly process of the 50S ribosomal subunit. It is not involved in the protein synthesizing functions of that subunit. This Limosilactobacillus fermentum (strain NBRC 3956 / LMG 18251) (Lactobacillus fermentum) protein is Large ribosomal subunit protein bL20.